Here is a 413-residue protein sequence, read N- to C-terminus: MLKEHLDPRKPSGTGYTSKVRVRDKYHIVGFISSGTYGRVYKALGKNGQKGEFAIKKFKPDKEGEIIQYTGLSQSAIREMALCSELDHANVVQLEEIILEDKAIFMVFEYTEHDLLQIIHHHTQPHRHAIPAPMVRSILFQLLNGLLYLHTSWVLHRDLKPANILVTSSGAIRIGDLGLARLFYKPLNSLFSGDKVVVTIWYRAPELLMGSRHYTPAVDLWAVGCIFAELLSLRPIFKGEEAKMDSKKTVPFQRNQMMKIIEIMGLPTKDIWPGIVSMPEYSQLQSLAMSRAPGHFPRSSNLEGWYQSCLKNGGYATSSGAGTPGADGYDLLSRLLEYDPTKRITAQEALEHPYFKNGGPISANCFEGFEGKYPHRRVTQDDNDIRSGSLPGTKRSGLPDDSLMGRASKRLKE.

A Protein kinase domain is found at Tyr26–Phe355. ATP is bound by residues Ile32–Val40 and Lys56. The active-site Proton acceptor is the Asp158. The segment covering Arg376–Ile385 has biased composition (basic and acidic residues). The interval Arg376–Glu413 is disordered.

The protein belongs to the protein kinase superfamily. CMGC Ser/Thr protein kinase family. CDC2/CDKX subfamily. As to quaternary structure, component of the srb8-11 complex, a regulatory module of the Mediator complex. Mg(2+) is required as a cofactor.

The protein resides in the nucleus. The enzyme catalyses L-seryl-[protein] + ATP = O-phospho-L-seryl-[protein] + ADP + H(+). The catalysed reaction is L-threonyl-[protein] + ATP = O-phospho-L-threonyl-[protein] + ADP + H(+). It carries out the reaction [DNA-directed RNA polymerase] + ATP = phospho-[DNA-directed RNA polymerase] + ADP + H(+). Component of the srb8-11 complex. The srb8-11 complex is a regulatory module of the Mediator complex which is itself involved in regulation of basal and activated RNA polymerase II-dependent transcription. The srb8-11 complex may be involved in the transcriptional repression of a subset of genes regulated by Mediator. It may inhibit the association of the Mediator complex with RNA polymerase II to form the holoenzyme complex. The srb8-11 complex phosphorylates the C-terminal domain (CTD) of the largest subunit of RNA polymerase II. This is Serine/threonine-protein kinase SSN3 (ssn3) from Aspergillus oryzae (strain ATCC 42149 / RIB 40) (Yellow koji mold).